A 385-amino-acid polypeptide reads, in one-letter code: MKVAYFDCFAGIAGDMTVAALIELGLPLEVLRRELAGLPLSGYALESSKVERHGVAGTSFKVTLTEADQPHRHYSGIAKMIDESGLKPRVKELAQRIFRRLAEAEAAVHGVPLERVHFHEVGAIDSIVDIVGTAIGLDYLGVEAVYASGLPYGRGFVQTAHGRLPVPAPATAKLMEGIPLTFDIGEGERVTPTGAAIIAALAEGFGPPPSLTPLGTGYGAGEKDFPELPNLLRVLLGERAEGKGHQEVLVLETHIDDMNPEIFGFLMERLLEAGALDVAFSPLQMKKNRPATRLTVIADPADLEKLSAIVLSESTAIGLRYYPARRVTAARRCETRETTLGEVAVKVLETGRVTPEYDSCRKIALEKGIPLIEVYRTVERECGQA.

It belongs to the LarC family.

The polypeptide is Putative nickel insertion protein (Geobacter sp. (strain M21)).